We begin with the raw amino-acid sequence, 493 residues long: Protein translocase subunit SecY (493 aa).

Residues 1–21 (MDSVIRALQPYFERIPSVERP) are Cytoplasmic-facing. The chain crosses the membrane as a helical span at residues 22–48 (KGHVHFREKFGWTAAILLLYFILSNVP). The Extracellular segment spans residues 49–59 (VFGLSPESIDI). An intramembrane region (helical) is located at residues 60–67 (FAAYRALF). A discontinuously helical membrane pass occupies residues 60–88 (FAAYRALFAGSTGSIIALGIGPIVTASII). An intramembrane segment occupies 68-79 (AGSTGSIIALGI). An intramembrane region (helical) is located at residues 80–88 (GPIVTASII). Topologically, residues 89 to 109 (LQLLVGAGIIKLDLTNPEDRA) are cytoplasmic. The chain crosses the membrane as a helical span at residues 110–134 (AYQDFQRFLVFVMIAVEAIPQIAGG). Residues 135 to 151 (LLKPDLNLAAQLGVSPG) are Extracellular-facing. A helical membrane pass occupies residues 152–176 (IISFLIFIQLFIGGVLIVYMDEVVS). The Cytoplasmic segment spans residues 177–182 (KWGIGS). The helical transmembrane segment at 183–201 (GVSLFILAGIAQSIVVGLF) threads the bilayer. The Extracellular portion of the chain corresponds to 202-244 (NWVIPPNSAMPAGIIPRWIWIAQNYPLDQLFTGSGLAFLLIQG). Residues 245–266 (GILALITTAAIILLVVFFEGTR) traverse the membrane as a helical segment. The Cytoplasmic segment spans residues 267–291 (VEIPLAHAVARGARGRFPIKLIYAS). Residues 292-313 (VLPMIFVRALQANVVALGQVLH) form a helical membrane-spanning segment. Residues 314–367 (ARGVTIFGEFVNGKAVSGLMFFLQPVSSPYDWIPSLVKSQGAAFAAIPDWMIYL) are Extracellular-facing. Residues 368-387 (HLLIDALILVVGGIIFAWFW) traverse the membrane as a helical segment. At 388-430 (VETSGMDARTVASQIAKSGMQVPGFRKSPQVLERVLSRYIPKV) the chain is on the cytoplasmic side. The chain crosses the membrane as a helical span at residues 431–449 (TILGGAIIGILTLVANMLG). Residues 450-454 (TIGNV) lie on the Extracellular side of the membrane. A helical transmembrane segment spans residues 455–469 (SGTGLLLAVSIAYRF). Residues 470–493 (YEDLAKEQLTEMHPLIRRMLGEEA) are Cytoplasmic-facing.

The protein belongs to the SecY/SEC61-alpha family. As to quaternary structure, component of the Sec protein translocase complex. Heterotrimer consisting of alpha (SecY), beta (SecG) and gamma (SecE) subunits. The heterotrimers can form oligomers, although 1 heterotrimer is thought to be able to translocate proteins. Interacts with the ribosome. May interact with SecDF, and other proteins may be involved.

It localises to the cell membrane. Functionally, the central subunit of the protein translocation channel SecYEG. Consists of two halves formed by TMs 1-5 and 6-10. These two domains form a lateral gate at the front which open onto the bilayer between TMs 2 and 7, and are clamped together by SecE at the back. The channel is closed by both a pore ring composed of hydrophobic SecY resides and a short helix (helix 2A) on the extracellular side of the membrane which forms a plug. The plug probably moves laterally to allow the channel to open. The ring and the pore may move independently. This Archaeoglobus fulgidus (strain ATCC 49558 / DSM 4304 / JCM 9628 / NBRC 100126 / VC-16) protein is Protein translocase subunit SecY.